A 445-amino-acid chain; its full sequence is Argininosuccinate synthase (445 aa).

ATP is bound by residues 17–25 (AFSGGLDTS) and Ala43. Residue Tyr99 participates in L-citrulline binding. 2 residues coordinate ATP: Gly129 and Thr131. The L-aspartate site is built by Thr131, Asn135, and Asp136. Residue Asn135 coordinates L-citrulline. Residue Asp136 coordinates ATP. Positions 139 and 192 each coordinate L-citrulline. Residue Asp194 participates in ATP binding. Residues Thr201, Glu203, and Glu280 each coordinate L-citrulline.

Belongs to the argininosuccinate synthase family. Type 2 subfamily. As to quaternary structure, homotetramer.

The protein localises to the cytoplasm. The enzyme catalyses L-citrulline + L-aspartate + ATP = 2-(N(omega)-L-arginino)succinate + AMP + diphosphate + H(+). The protein operates within amino-acid biosynthesis; L-arginine biosynthesis; L-arginine from L-ornithine and carbamoyl phosphate: step 2/3. The chain is Argininosuccinate synthase from Polaromonas naphthalenivorans (strain CJ2).